A 376-amino-acid polypeptide reads, in one-letter code: Queuine tRNA-ribosyltransferase (376 aa).

The active-site Proton acceptor is the Asp-93. Substrate is bound by residues 93–97 (DSGGF), Asp-147, Gln-191, and Gly-218. The tract at residues 249–255 (GVGKPED) is RNA binding. The active-site Nucleophile is Asp-268. The segment at 273–277 (TRNAR) is RNA binding; important for wobble base 34 recognition. Zn(2+) contacts are provided by Cys-306, Cys-308, Cys-311, and His-337.

The protein belongs to the queuine tRNA-ribosyltransferase family. As to quaternary structure, homodimer. Within each dimer, one monomer is responsible for RNA recognition and catalysis, while the other monomer binds to the replacement base PreQ1. The cofactor is Zn(2+).

It carries out the reaction 7-aminomethyl-7-carbaguanine + guanosine(34) in tRNA = 7-aminomethyl-7-carbaguanosine(34) in tRNA + guanine. It participates in tRNA modification; tRNA-queuosine biosynthesis. Its function is as follows. Catalyzes the base-exchange of a guanine (G) residue with the queuine precursor 7-aminomethyl-7-deazaguanine (PreQ1) at position 34 (anticodon wobble position) in tRNAs with GU(N) anticodons (tRNA-Asp, -Asn, -His and -Tyr). Catalysis occurs through a double-displacement mechanism. The nucleophile active site attacks the C1' of nucleotide 34 to detach the guanine base from the RNA, forming a covalent enzyme-RNA intermediate. The proton acceptor active site deprotonates the incoming PreQ1, allowing a nucleophilic attack on the C1' of the ribose to form the product. After dissociation, two additional enzymatic reactions on the tRNA convert PreQ1 to queuine (Q), resulting in the hypermodified nucleoside queuosine (7-(((4,5-cis-dihydroxy-2-cyclopenten-1-yl)amino)methyl)-7-deazaguanosine). The polypeptide is Queuine tRNA-ribosyltransferase (Histophilus somni (strain 129Pt) (Haemophilus somnus)).